We begin with the raw amino-acid sequence, 1242 residues long: ATP-dependent RNA helicase DHX8 (1242 aa).

Disordered regions lie at residues 75-283 (RPSR…DDPE) and 354-449 (SMKE…GLLP). Basic and acidic residues-rich tracts occupy residues 87-97 (TVGDKKEDKKS), 113-141 (YSKKEESDDDEKVKAKPEKHSETHKKTDM), and 180-196 (RDRDTKRRSRSREDRHS). Basic residues-rich tracts occupy residues 197 to 222 (DRRRSRSRDKERRRRSRSRDNRRRSR) and 232 to 252 (DRRHKSSSSRDHHERRRRSRS). The segment covering 253-269 (RSTERRDRRDRSRDCSE) has biased composition (basic and acidic residues). Residues 285 to 356 (GKIYSGKIAN…TGQKVSLSMK (72 aa)) form the S1 motif domain. The span at 388-399 (FSSSTSMLNLQG) shows a compositional bias: polar residues. Acidic residues predominate over residues 439-449 (PDFDEETGLLP). In terms of domain architecture, Helicase ATP-binding spans 596–759 (IKAVTDNQIL…FFKAPIFTIP (164 aa)). 609–616 (GETGSGKT) provides a ligand contact to ATP. The short motif at 706–709 (DEAH) is the DEAH box element. The Helicase C-terminal domain maps to 777 to 957 (YLDASLITVM…TTVLQLKTMG (181 aa)).

This sequence belongs to the DEAD box helicase family. DEAH subfamily. DDX8/PRP22 sub-subfamily. In terms of assembly, identified in the spliceosome C complex.

It localises to the nucleus. It carries out the reaction ATP + H2O = ADP + phosphate + H(+). Its function is as follows. Involved in pre-mRNA splicing as component of the spliceosome. Facilitates nuclear export of spliced mRNA by releasing the RNA from the spliceosome. Before and after egg-chamber formation, required for nurse-cell chromatin dispersal (NCCD) probably by playing a role in spliceosome localization to chromatin/interchromatin spaces. The chain is ATP-dependent RNA helicase DHX8 from Drosophila melanogaster (Fruit fly).